Here is a 92-residue protein sequence, read N- to C-terminus: MICAVYKSSRKQETYLFVPKRDDFSQVPEPLLQMFGTPLLVMLLPLDRKEKLGIADIDKVRSELAQKGYYLQLPPPKDNLLTQHRRDLGIED.

The YcgL domain maps to 1-85; the sequence is MICAVYKSSR…PKDNLLTQHR (85 aa).

This Shewanella amazonensis (strain ATCC BAA-1098 / SB2B) protein is YcgL domain-containing protein Sama_1929.